Reading from the N-terminus, the 105-residue chain is Small ribosomal subunit protein eS24 (105 aa).

Belongs to the eukaryotic ribosomal protein eS24 family.

This Haloquadratum walsbyi (strain DSM 16790 / HBSQ001) protein is Small ribosomal subunit protein eS24.